The primary structure comprises 882 residues: DNA mismatch repair protein MutS (882 aa).

Gly-627–Ser-634 serves as a coordination point for ATP.

Belongs to the DNA mismatch repair MutS family.

In terms of biological role, this protein is involved in the repair of mismatches in DNA. It is possible that it carries out the mismatch recognition step. This protein has a weak ATPase activity. This chain is DNA mismatch repair protein MutS, found in Anaeromyxobacter dehalogenans (strain 2CP-C).